Reading from the N-terminus, the 72-residue chain is Translation initiation factor IF-1 (72 aa).

One can recognise an S1-like domain in the interval methionine 1–lysine 72.

The protein belongs to the IF-1 family. Component of the 30S ribosomal translation pre-initiation complex which assembles on the 30S ribosome in the order IF-2 and IF-3, IF-1 and N-formylmethionyl-tRNA(fMet); mRNA recruitment can occur at any time during PIC assembly.

The protein resides in the cytoplasm. In terms of biological role, one of the essential components for the initiation of protein synthesis. Stabilizes the binding of IF-2 and IF-3 on the 30S subunit to which N-formylmethionyl-tRNA(fMet) subsequently binds. Helps modulate mRNA selection, yielding the 30S pre-initiation complex (PIC). Upon addition of the 50S ribosomal subunit IF-1, IF-2 and IF-3 are released leaving the mature 70S translation initiation complex. The protein is Translation initiation factor IF-1 of Acetivibrio thermocellus (strain ATCC 27405 / DSM 1237 / JCM 9322 / NBRC 103400 / NCIMB 10682 / NRRL B-4536 / VPI 7372) (Clostridium thermocellum).